The chain runs to 215 residues: ATP phosphoribosyltransferase (215 aa).

Belongs to the ATP phosphoribosyltransferase family. Short subfamily. As to quaternary structure, heteromultimer composed of HisG and HisZ subunits.

The protein localises to the cytoplasm. The enzyme catalyses 1-(5-phospho-beta-D-ribosyl)-ATP + diphosphate = 5-phospho-alpha-D-ribose 1-diphosphate + ATP. The protein operates within amino-acid biosynthesis; L-histidine biosynthesis; L-histidine from 5-phospho-alpha-D-ribose 1-diphosphate: step 1/9. In terms of biological role, catalyzes the condensation of ATP and 5-phosphoribose 1-diphosphate to form N'-(5'-phosphoribosyl)-ATP (PR-ATP). Has a crucial role in the pathway because the rate of histidine biosynthesis seems to be controlled primarily by regulation of HisG enzymatic activity. This Acidithiobacillus ferrooxidans (strain ATCC 23270 / DSM 14882 / CIP 104768 / NCIMB 8455) (Ferrobacillus ferrooxidans (strain ATCC 23270)) protein is ATP phosphoribosyltransferase.